The following is a 146-amino-acid chain: Small ribosomal subunit protein uS15 (146 aa).

The protein belongs to the universal ribosomal protein uS15 family. Part of the 30S ribosomal subunit.

In Picrophilus torridus (strain ATCC 700027 / DSM 9790 / JCM 10055 / NBRC 100828 / KAW 2/3), this protein is Small ribosomal subunit protein uS15.